A 248-amino-acid polypeptide reads, in one-letter code: Probable transcriptional regulatory protein Ecaj_0351 (248 aa).

A disordered region spans residues 1–21 (MAGHSQFANIKHRKGAQDAKR).

This sequence belongs to the TACO1 family.

It localises to the cytoplasm. This chain is Probable transcriptional regulatory protein Ecaj_0351, found in Ehrlichia canis (strain Jake).